A 236-amino-acid polypeptide reads, in one-letter code: Small ribosomal subunit protein uS2 (236 aa).

This sequence belongs to the universal ribosomal protein uS2 family.

The sequence is that of Small ribosomal subunit protein uS2 from Brevibacillus brevis (strain 47 / JCM 6285 / NBRC 100599).